The following is a 94-amino-acid chain: Phosphoribosyl-ATP pyrophosphatase (94 aa).

Belongs to the PRA-PH family.

Its subcellular location is the cytoplasm. The enzyme catalyses 1-(5-phospho-beta-D-ribosyl)-ATP + H2O = 1-(5-phospho-beta-D-ribosyl)-5'-AMP + diphosphate + H(+). It participates in amino-acid biosynthesis; L-histidine biosynthesis; L-histidine from 5-phospho-alpha-D-ribose 1-diphosphate: step 2/9. The sequence is that of Phosphoribosyl-ATP pyrophosphatase from Saccharolobus islandicus (strain Y.N.15.51 / Yellowstone #2) (Sulfolobus islandicus).